A 247-amino-acid polypeptide reads, in one-letter code: V-type proton ATPase subunit D (247 aa).

This sequence belongs to the V-ATPase D subunit family. In terms of assembly, V-ATPase is a heteromultimeric enzyme made up of two complexes: the ATP-hydrolytic V1 complex and the proton translocation V0 complex. The V1 complex consists of three catalytic AB heterodimers that form a heterohexamer, three peripheral stalks each consisting of EG heterodimers, one central rotor including subunits D and F, and the regulatory subunits C and H. The proton translocation complex V0 consists of the proton transport subunit a, a ring of proteolipid subunits c9c'', rotary subunit d, subunits e and f, and the accessory subunits ATP6AP1/Ac45 and ATP6AP2/PRR. Interacts with SNX10.

It is found in the membrane. The protein localises to the cytoplasmic vesicle. The protein resides in the clathrin-coated vesicle membrane. Its subcellular location is the cytoplasm. It localises to the cytoskeleton. It is found in the microtubule organizing center. The protein localises to the centrosome. The protein resides in the cell projection. Its subcellular location is the cilium. Functionally, subunit of the V1 complex of vacuolar(H+)-ATPase (V-ATPase), a multisubunit enzyme composed of a peripheral complex (V1) that hydrolyzes ATP and a membrane integral complex (V0) that translocates protons. V-ATPase is responsible for acidifying and maintaining the pH of intracellular compartments and in some cell types, is targeted to the plasma membrane, where it is responsible for acidifying the extracellular environment. May play a role in cilium biogenesis through regulation of the transport and the localization of proteins to the cilium. The chain is V-type proton ATPase subunit D (ATP6V1D) from Homo sapiens (Human).